Here is a 927-residue protein sequence, read N- to C-terminus: GPI inositol-deacylase (927 aa).

Residues 1–4 (MNPL) are Cytoplasmic-facing. A helical transmembrane segment spans residues 5 to 25 (SAVFNSVVLVLLALGVTDVFF). Over 26–595 (SYESSRCSMT…QIVRFHGIYL (570 aa)) the chain is Lumenal. Asn75 and Asn155 each carry an N-linked (GlcNAc...) asparagine glycan. Ser169 is an active-site residue. 6 N-linked (GlcNAc...) asparagine glycosylation sites follow: Asn230, Asn362, Asn397, Asn432, Asn444, and Asn482. A helical membrane pass occupies residues 596–616 (PVYIVANLLLAYGAQLHSILI). Residues 617–672 (QGSCMDLDLSFDVAAKPYKVDPVLIICKYLLNYKWFKNYWDGLMLPQLDAVQLHAY) are Cytoplasmic-facing. The helical transmembrane segment at 673–693 (GFWFPLASLFFFIFGTSIAYW) threads the bilayer. Residues 694–733 (SSIGLQAAVRILSSLWIYLKRPSMFPKESKCITYRVYAET) are Lumenal-facing. The chain crosses the membrane as a helical span at residues 734 to 754 (LFFAFISWRSCGTFSLLLVFL). Over 755–821 (RYLSKVLILY…KALDDCLKMH (67 aa)) the chain is Cytoplasmic. A helical membrane pass occupies residues 822 to 842 (FTILHLNLWIVLLGLPSFIYW). The Lumenal portion of the chain corresponds to 843-858 (LKTLRYTIQLDPDPNR). The chain crosses the membrane as a helical span at residues 859 to 879 (VSALVLIFILEILMNSTTSAI). The Cytoplasmic portion of the chain corresponds to 880–887 (KSSVCLKT). The helical transmembrane segment at 888–908 (AAVLQLPLSIIVVAFGTLHLY) threads the bilayer. At 909–927 (RISNLIAFSLFLHVVCCFV) the chain is on the lumenal side.

Belongs to the GPI inositol-deacylase family.

The protein localises to the endoplasmic reticulum membrane. Functionally, GPI inositol-deacylase that catalyzes the remove of the acyl chain linked to the 2-OH position of inositol ring from the GPI-anchored protein (GPI-AP) in the endoplasmic reticulum. Initiates the post-attachment remodeling phase of GPI-AP biogenesis and participates in endoplasmic reticulum (ER)-to-Golgi transport of GPI-anchored protein. In Xenopus laevis (African clawed frog), this protein is GPI inositol-deacylase.